The following is a 1046-amino-acid chain: Piwi-like protein 2 (1046 aa).

Positions M1–P12 are enriched in pro residues. The tract at residues M1–L35 is disordered. Residues W19–D31 are compositionally biased toward polar residues. The region spanning S462–G575 is the PAZ domain. The 292-residue stretch at L741–H1032 folds into the Piwi domain. Active-site residues include D818, E856, D888, and H1021.

Belongs to the argonaute family. Piwi subfamily. As to quaternary structure, component of the PET complex. The cofactor is Mg(2+). In terms of processing, methylated on arginine residues; required for the interaction with Tudor domain-containing protein and subsequent localization to the meiotic nuage, also named P granule. As to expression, detected in primordial germ cells (PGCs) from 3 dpf. In adult, it is found in both the female and male gonad. In the ovary, it is present in all stages of germ cell differentiation. In testis, it is present in mitotic and meiotic germ cells. No protein has been detected in the fully differentiated sperm cell.

The protein localises to the cytoplasm. The protein resides in the nucleus. Functionally, endoribonuclease that plays a central role during spermatogenesis by repressing transposable elements and preventing their mobilization, which is essential for the germline integrity. Plays an essential role in germ cell differentiation and meiosis, independently of the function in transposable elements repression. Acts via the piRNA metabolic process, which mediates the repression of transposable elements during meiosis by forming complexes composed of piRNAs and Piwi proteins and govern the methylation and subsequent repression of transposons. During piRNA biosynthesis, plays a key role in the piRNA amplification loop, also named ping-pong amplification cycle, by acting as a 'slicer-competent' piRNA endoribonuclease that cleaves primary piRNAs, which are then loaded onto 'slicer-incompetent' piwil4. Piwil2 slicing produces a pre-miRNA intermediate, which is then processed in mature piRNAs, and as well as a 16 nucleotide by-product that is degraded. Required for piwil4/miwi2 nuclear localization and association with secondary piRNAs antisense. Represses circadian rhythms by promoting the stability and activity of core clock components BMAL1 and CLOCK. The protein is Piwi-like protein 2 (piwil2) of Danio rerio (Zebrafish).